Consider the following 546-residue polypeptide: Chaperonin GroEL (546 aa).

ATP-binding positions include 30–33, lysine 51, 87–91, glycine 415, and aspartate 495; these read TLGP and DGTTT.

This sequence belongs to the chaperonin (HSP60) family. In terms of assembly, forms a cylinder of 14 subunits composed of two heptameric rings stacked back-to-back. Interacts with the co-chaperonin GroES.

Its subcellular location is the cytoplasm. The catalysed reaction is ATP + H2O + a folded polypeptide = ADP + phosphate + an unfolded polypeptide.. Together with its co-chaperonin GroES, plays an essential role in assisting protein folding. The GroEL-GroES system forms a nano-cage that allows encapsulation of the non-native substrate proteins and provides a physical environment optimized to promote and accelerate protein folding. The protein is Chaperonin GroEL of Brucella suis (strain ATCC 23445 / NCTC 10510).